We begin with the raw amino-acid sequence, 576 residues long: Polypeptide N-acetylgalactosaminyltransferase 12 (576 aa).

Residues 1–19 (MWGRAVRRRCPRGLRRGRE) are Cytoplasmic-facing. Residues 20-37 (ALLALLALAGLGALLRAR) form a helical; Signal-anchor for type II membrane protein membrane-spanning segment. The segment at 38–58 (SRSGTVDPGPPRTPLPGRHEP) is disordered. Over 38–576 (SRSGTVDPGP…QRWFFKERMS (539 aa)) the chain is Lumenal. Disulfide bonds link C120–C353, C344–C417, C453–C474, C501–C516, and C542–C561. The tract at residues 130–239 (LPKTSVVIAF…EGWLEPLLQR (110 aa)) is catalytic subdomain A. Residues D171 and R200 each coordinate substrate. Mn(2+) is bound by residues D223 and H225. Residues 299–361 (VIRSPTMAGG…PCSHVGHVFP (63 aa)) form a catalytic subdomain B region. W330 provides a ligand contact to substrate. Residue H358 participates in Mn(2+) binding. Y366 provides a ligand contact to substrate. Positions 440 to 572 (FFGMLQNRGL…NSDNQRWFFK (133 aa)) constitute a Ricin B-type lectin domain.

It belongs to the glycosyltransferase 2 family. GalNAc-T subfamily. It depends on Mn(2+) as a cofactor.

It localises to the golgi apparatus membrane. The catalysed reaction is L-seryl-[protein] + UDP-N-acetyl-alpha-D-galactosamine = a 3-O-[N-acetyl-alpha-D-galactosaminyl]-L-seryl-[protein] + UDP + H(+). The enzyme catalyses L-threonyl-[protein] + UDP-N-acetyl-alpha-D-galactosamine = a 3-O-[N-acetyl-alpha-D-galactosaminyl]-L-threonyl-[protein] + UDP + H(+). It participates in protein modification; protein glycosylation. In terms of biological role, catalyzes the initial reaction in O-linked oligosaccharide biosynthesis, the transfer of an N-acetyl-D-galactosamine residue to a serine or threonine residue on the protein receptor. Has activity toward non-glycosylated peptides such as Muc5AC, Muc1a and EA2, and no detectable activity with Muc2 and Muc7. Displays enzymatic activity toward the Gal-NAc-Muc5AC glycopeptide, but no detectable activity to mono-GalNAc-glycosylated Muc1a, Muc2, Muc7 and EA2. May play an important role in the initial step of mucin-type oligosaccharide biosynthesis in digestive organs. This chain is Polypeptide N-acetylgalactosaminyltransferase 12 (Galnt12), found in Mus musculus (Mouse).